A 297-amino-acid chain; its full sequence is Probable oxidoreductase (297 aa).

Residue 9-33 (VVTGGASGLGAETVRALAAAGAEVT) coordinates NAD(+). S138 provides a ligand contact to substrate. The active-site Proton acceptor is the Y164.

Belongs to the short-chain dehydrogenases/reductases (SDR) family.

In Streptomyces lividans, this protein is Probable oxidoreductase.